The sequence spans 72 residues: Large ribosomal subunit protein uL29 (72 aa).

The protein belongs to the universal ribosomal protein uL29 family.

The protein is Large ribosomal subunit protein uL29 of Prochlorococcus marinus (strain AS9601).